A 115-amino-acid polypeptide reads, in one-letter code: U3-lycotoxin-Ls1k (115 aa).

The N-terminal stretch at 1–20 (MKFVLLFGVLVVTLFSYSSA) is a signal peptide. Positions 21-44 (EMLDDFDQADEDELLSLIEKEEAR) are excised as a propeptide. Disulfide bonds link Cys48–Cys63, Cys55–Cys72, Cys62–Cys87, and Cys74–Cys85.

Belongs to the neurotoxin 19 (CSTX) family. 01 subfamily. As to expression, expressed by the venom gland.

Its subcellular location is the secreted. This chain is U3-lycotoxin-Ls1k, found in Lycosa singoriensis (Wolf spider).